The chain runs to 563 residues: Cytidine monophosphate-N-acetylneuraminic acid hydroxylase (563 aa).

In terms of domain architecture, Rieske spans 10–108; that stretch reads LSPAETANLK…VEMDGNDGLF (99 aa). Residues cysteine 50, histidine 52, cysteine 71, and histidine 74 each contribute to the [2Fe-2S] cluster site.

The protein belongs to the CMP-Neu5Ac hydroxylase family. Requires [2Fe-2S] cluster as cofactor.

It is found in the cytoplasm. It carries out the reaction CMP-N-acetyl-beta-neuraminate + 2 Fe(II)-[cytochrome b5] + O2 + 2 H(+) = CMP-N-glycoloyl-beta-neuraminate + 2 Fe(III)-[cytochrome b5] + H2O. The protein operates within amino-sugar metabolism; N-acetylneuraminate metabolism. In terms of biological role, sialic acids are components of carbohydrate chains of glycoconjugates and are involved in cell-cell recognition and cell-pathogen interactions. Catalyzes the conversion of CMP-N-acetylneuraminic acid (CMP-Neu5Ac) into its hydroxylated derivative CMP-N-glycolylneuraminic acid (CMP-Neu5Gc), a sialic acid abundantly expressed at the surface of many cells. The polypeptide is Cytidine monophosphate-N-acetylneuraminic acid hydroxylase (CMAH) (Cricetulus griseus (Chinese hamster)).